Consider the following 66-residue polypeptide: Small ribosomal subunit protein bS21 (66 aa).

The protein belongs to the bacterial ribosomal protein bS21 family.

This Rickettsia typhi (strain ATCC VR-144 / Wilmington) protein is Small ribosomal subunit protein bS21.